Here is a 370-residue protein sequence, read N- to C-terminus: Holliday junction branch migration complex subunit RuvB 2 (370 aa).

The disordered stretch occupies residues 1–54 (MAIISSRAAGAEDPGQRQQKSSARRRESKLAFARAEGLLQPQAHPSEAQEESLR). Positions 13-214 (DPGQRQQKSS…FGQVQRLRFY (202 aa)) are large ATPase domain (RuvB-L). ATP is bound by residues L53, R54, G95, K98, T99, T100, 161 to 163 (EDF), R204, Y214, and R251. T99 serves as a coordination point for Mg(2+). Residues 215–285 (EPHELAEIVL…VAAAALELFQ (71 aa)) are small ATPAse domain (RuvB-S). A head domain (RuvB-H) region spans residues 288–370 (PMGLDWTDRK…TAQSPLPVWS (83 aa)). DNA is bound by residues R343 and R348.

It belongs to the RuvB family. As to quaternary structure, homohexamer. Forms an RuvA(8)-RuvB(12)-Holliday junction (HJ) complex. HJ DNA is sandwiched between 2 RuvA tetramers; dsDNA enters through RuvA and exits via RuvB. An RuvB hexamer assembles on each DNA strand where it exits the tetramer. Each RuvB hexamer is contacted by two RuvA subunits (via domain III) on 2 adjacent RuvB subunits; this complex drives branch migration. In the full resolvosome a probable DNA-RuvA(4)-RuvB(12)-RuvC(2) complex forms which resolves the HJ.

It is found in the cytoplasm. The enzyme catalyses ATP + H2O = ADP + phosphate + H(+). In terms of biological role, the RuvA-RuvB-RuvC complex processes Holliday junction (HJ) DNA during genetic recombination and DNA repair, while the RuvA-RuvB complex plays an important role in the rescue of blocked DNA replication forks via replication fork reversal (RFR). RuvA specifically binds to HJ cruciform DNA, conferring on it an open structure. The RuvB hexamer acts as an ATP-dependent pump, pulling dsDNA into and through the RuvAB complex. RuvB forms 2 homohexamers on either side of HJ DNA bound by 1 or 2 RuvA tetramers; 4 subunits per hexamer contact DNA at a time. Coordinated motions by a converter formed by DNA-disengaged RuvB subunits stimulates ATP hydrolysis and nucleotide exchange. Immobilization of the converter enables RuvB to convert the ATP-contained energy into a lever motion, pulling 2 nucleotides of DNA out of the RuvA tetramer per ATP hydrolyzed, thus driving DNA branch migration. The RuvB motors rotate together with the DNA substrate, which together with the progressing nucleotide cycle form the mechanistic basis for DNA recombination by continuous HJ branch migration. Branch migration allows RuvC to scan DNA until it finds its consensus sequence, where it cleaves and resolves cruciform DNA. The polypeptide is Holliday junction branch migration complex subunit RuvB 2 (Synechococcus sp. (strain JA-3-3Ab) (Cyanobacteria bacterium Yellowstone A-Prime)).